A 537-amino-acid chain; its full sequence is Hexahomomethionine N-hydroxylase (537 aa).

Residues 7 to 27 (FNTCFQILLGFIVFIASITLL) form a helical membrane-spanning segment.

This sequence belongs to the cytochrome P450 family. It depends on heme as a cofactor. In terms of tissue distribution, highly expressed in hypocotyl and roots. Lower expression in siliques, stems and leaves. Barely detectable in flowers. Expressed only in the vascular bundles in apical plant parts.

It localises to the endoplasmic reticulum membrane. It catalyses the reaction L-hexahomomethionine + 2 reduced [NADPH--hemoprotein reductase] + 2 O2 = (E)-9-(methylsulfanyl)nonanal oxime + 2 oxidized [NADPH--hemoprotein reductase] + CO2 + 3 H2O + 2 H(+). It carries out the reaction L-pentahomomethionine + 2 reduced [NADPH--hemoprotein reductase] + 2 O2 = (E)-8-(methylsulfanyl)octanal oxime + 2 oxidized [NADPH--hemoprotein reductase] + CO2 + 3 H2O + 2 H(+). The enzyme catalyses an L-polyhomomethionine + 2 reduced [NADPH--hemoprotein reductase] + 2 O2 = an (E)-omega-(methylsulfanyl)-alkanal oxime + 2 oxidized [NADPH--hemoprotein reductase] + CO2 + 3 H2O + 2 H(+). Functionally, catalyzes the conversion of the long chain elongated methionines penta- and hexahomomethionine to their corresponding aldoximes 8-methylthiooctanaldoxime and 9-methylthiononanaldoxime. The polypeptide is Hexahomomethionine N-hydroxylase (CYP79F2) (Arabidopsis thaliana (Mouse-ear cress)).